We begin with the raw amino-acid sequence, 201 residues long: Orotidine 5'-phosphate decarboxylase (201 aa).

Substrate is bound by residues D8, K26, 52–61 (DLKFCDIPST), T106, R153, Q161, G180, and R181. The Proton donor role is filled by K54.

It belongs to the OMP decarboxylase family. Type 1 subfamily. In terms of assembly, homodimer.

It catalyses the reaction orotidine 5'-phosphate + H(+) = UMP + CO2. Its pathway is pyrimidine metabolism; UMP biosynthesis via de novo pathway; UMP from orotate: step 2/2. Functionally, catalyzes the decarboxylation of orotidine 5'-monophosphate (OMP) to uridine 5'-monophosphate (UMP). The sequence is that of Orotidine 5'-phosphate decarboxylase (pyrF) from Thermotoga maritima (strain ATCC 43589 / DSM 3109 / JCM 10099 / NBRC 100826 / MSB8).